The primary structure comprises 138 residues: Nucleoside diphosphate kinase (138 aa).

The ATP site is built by Lys9, Phe57, Arg85, Thr91, Arg102, and Asn112. His115 acts as the Pros-phosphohistidine intermediate in catalysis.

Belongs to the NDK family. In terms of assembly, homotetramer. Requires Mg(2+) as cofactor.

It is found in the cytoplasm. The enzyme catalyses a 2'-deoxyribonucleoside 5'-diphosphate + ATP = a 2'-deoxyribonucleoside 5'-triphosphate + ADP. It catalyses the reaction a ribonucleoside 5'-diphosphate + ATP = a ribonucleoside 5'-triphosphate + ADP. In terms of biological role, major role in the synthesis of nucleoside triphosphates other than ATP. The ATP gamma phosphate is transferred to the NDP beta phosphate via a ping-pong mechanism, using a phosphorylated active-site intermediate. This Deinococcus geothermalis (strain DSM 11300 / CIP 105573 / AG-3a) protein is Nucleoside diphosphate kinase.